Here is a 97-residue protein sequence, read N- to C-terminus: MIPLMAKTGNYQVANVNVRNLPDEVHRAIRIQAALHGRSTEAEIRDILERAARPEGRVKLGSFLASIAREVGGLTDKEHTLFENTRITSPARAVSFE.

Functionally, involved in plasmid stability. In Pseudomonas syringae pv. tomato (strain ATCC BAA-871 / DC3000), this protein is Plasmid stability protein StbC (stbC).